We begin with the raw amino-acid sequence, 426 residues long: Histidine--tRNA ligase (426 aa).

The protein belongs to the class-II aminoacyl-tRNA synthetase family. Homodimer.

The protein localises to the cytoplasm. It carries out the reaction tRNA(His) + L-histidine + ATP = L-histidyl-tRNA(His) + AMP + diphosphate + H(+). The chain is Histidine--tRNA ligase from Legionella pneumophila subsp. pneumophila (strain Philadelphia 1 / ATCC 33152 / DSM 7513).